The following is a 188-amino-acid chain: MDKLRLVVGLGNLGKQYAETRHNAGFKVIDRLLSLYHVQLEERNNLGEFILLRKHKVVLAKPNTYMNHSGKFVKWACQNWNIKPDKVMVVYDELAFPLGTVRLKMQGSANNHNGIKSVIAHLNTEHFNRLRFGIKSDNTSNILHEVVMSEFTPAERNLLETALTKAIEALKGYIDGVTMLKLMEVFNA.

A tRNA-binding site is contributed by Tyr-17. His-22 serves as the catalytic Proton acceptor. TRNA is bound by residues Tyr-65, Asn-67, and Asn-113.

This sequence belongs to the PTH family. As to quaternary structure, monomer.

It localises to the cytoplasm. The enzyme catalyses an N-acyl-L-alpha-aminoacyl-tRNA + H2O = an N-acyl-L-amino acid + a tRNA + H(+). Hydrolyzes ribosome-free peptidyl-tRNAs (with 1 or more amino acids incorporated), which drop off the ribosome during protein synthesis, or as a result of ribosome stalling. In terms of biological role, catalyzes the release of premature peptidyl moieties from peptidyl-tRNA molecules trapped in stalled 50S ribosomal subunits, and thus maintains levels of free tRNAs and 50S ribosomes. The chain is Peptidyl-tRNA hydrolase from Mycoplasma pneumoniae (strain ATCC 29342 / M129 / Subtype 1) (Mycoplasmoides pneumoniae).